The sequence spans 302 residues: Oxygen-dependent coproporphyrinogen-III oxidase (302 aa).

Ser-94 is a binding site for substrate. Residues His-98 and His-108 each coordinate a divalent metal cation. The active-site Proton donor is the His-108. 110 to 112 (NVR) contributes to the substrate binding site. A divalent metal cation is bound by residues His-147 and His-177. The segment at 242–277 (YVEFNLVYDRGTLFGLQTGGRTESILMSMPPLVRWQ) is important for dimerization. Residue 260–262 (GGR) coordinates substrate.

The protein belongs to the aerobic coproporphyrinogen-III oxidase family. Homodimer. A divalent metal cation serves as cofactor.

It is found in the cytoplasm. The catalysed reaction is coproporphyrinogen III + O2 + 2 H(+) = protoporphyrinogen IX + 2 CO2 + 2 H2O. It participates in porphyrin-containing compound metabolism; protoporphyrin-IX biosynthesis; protoporphyrinogen-IX from coproporphyrinogen-III (O2 route): step 1/1. Involved in the heme biosynthesis. Catalyzes the aerobic oxidative decarboxylation of propionate groups of rings A and B of coproporphyrinogen-III to yield the vinyl groups in protoporphyrinogen-IX. This is Oxygen-dependent coproporphyrinogen-III oxidase from Shewanella sp. (strain ANA-3).